The chain runs to 293 residues: Signal recognition particle receptor FtsY (293 aa).

GTP contacts are provided by residues 93 to 100, 175 to 179, and 239 to 242; these read GVNGAGKT, DTAGR, and TKLD.

The protein belongs to the GTP-binding SRP family. FtsY subfamily. Part of the signal recognition particle protein translocation system, which is composed of SRP and FtsY. SRP is a ribonucleoprotein composed of Ffh and a 4.5S RNA molecule.

It is found in the cell inner membrane. It localises to the cytoplasm. The catalysed reaction is GTP + H2O = GDP + phosphate + H(+). Involved in targeting and insertion of nascent membrane proteins into the cytoplasmic membrane. Acts as a receptor for the complex formed by the signal recognition particle (SRP) and the ribosome-nascent chain (RNC). Interaction with SRP-RNC leads to the transfer of the RNC complex to the Sec translocase for insertion into the membrane, the hydrolysis of GTP by both Ffh and FtsY, and the dissociation of the SRP-FtsY complex into the individual components. The protein is Signal recognition particle receptor FtsY of Helicobacter pylori (strain J99 / ATCC 700824) (Campylobacter pylori J99).